We begin with the raw amino-acid sequence, 117 residues long: Ig heavy chain V region 3 (117 aa).

An N-terminal signal peptide occupies residues 1–19; sequence MGWSCIILFLVATATGVHS. The segment at 20–49 is framework-1; that stretch reads QVQLQQPGAELVRPGSSVKLSCKASGYTFT. Residues Cys41 and Cys115 are joined by a disulfide bond. The complementarity-determining-1 stretch occupies residues 50-54; sequence SYWMD. The segment at 55–68 is framework-2; the sequence is WVKQRPGQGLEWIG. Residues 69–85 form a complementarity-determining-2 region; sequence NIYPSDSETHYNQKFKD. Residues 86-117 form a framework-3 region; it reads KATLTVDKSSSTAYMQLSSLTSEDSAVYYCAR.

This Mus musculus (Mouse) protein is Ig heavy chain V region 3 (Ighv1-61).